A 254-amino-acid chain; its full sequence is 3-deoxy-manno-octulosonate cytidylyltransferase (254 aa).

This sequence belongs to the KdsB family.

It localises to the cytoplasm. It carries out the reaction 3-deoxy-alpha-D-manno-oct-2-ulosonate + CTP = CMP-3-deoxy-beta-D-manno-octulosonate + diphosphate. Its pathway is nucleotide-sugar biosynthesis; CMP-3-deoxy-D-manno-octulosonate biosynthesis; CMP-3-deoxy-D-manno-octulosonate from 3-deoxy-D-manno-octulosonate and CTP: step 1/1. It participates in bacterial outer membrane biogenesis; lipopolysaccharide biosynthesis. Activates KDO (a required 8-carbon sugar) for incorporation into bacterial lipopolysaccharide in Gram-negative bacteria. This chain is 3-deoxy-manno-octulosonate cytidylyltransferase, found in Chlamydia trachomatis serovar A (strain ATCC VR-571B / DSM 19440 / HAR-13).